The chain runs to 139 residues: Actin-depolymerizing factor 1 (139 aa).

The 135-residue stretch at 5-139 (SSGLAVNDEC…SLDIVRSRTN (135 aa)) folds into the ADF-H domain.

This sequence belongs to the actin-binding proteins ADF family. Expressed in pollen.

In terms of biological role, actin-depolymerizing protein. Severs actin filaments (F-actin) and binds to actin monomers. The protein is Actin-depolymerizing factor 1 (ADF1) of Zea mays (Maize).